The chain runs to 369 residues: Thyroid hormone receptor beta (369 aa).

The tract at residues 1 to 14 (MSGYIPSYLDKDEL) is modulating. The Zn(2+) site is built by C15, C18, C32, C35, C53, C59, C69, and C72. 2 consecutive NR C4-type zinc fingers follow at residues 15–35 (CVVCGDKATGYHYRCITCEGC) and 53–77 (CKYEGKCVIDKVTRNQCQECRFKKC). Residues 15-89 (CVVCGDKATG…VGMATDLVLD (75 aa)) constitute a DNA-binding region (nuclear receptor). Positions 125 to 369 (EEWELIKIVT…PPLFLEVFED (245 aa)) constitute an NR LBD domain. Positions 190, 239, and 343 each coordinate 3,3',5-triiodo-L-thyronine. The L-thyroxine site is built by R190, N239, and H343.

The protein belongs to the nuclear hormone receptor family. NR1 subfamily.

It localises to the nucleus. Functionally, nuclear hormone receptor that can act as a repressor or activator of transcription. High affinity receptor for thyroid hormones, including triiodothyronine and thyroxine. The protein is Thyroid hormone receptor beta (THRB) of Cairina moschata (Muscovy duck).